The following is an 808-amino-acid chain: MSSVRAQFAEVQEQLNQVHSLVDSNTPSDLNKAATILKSLLPVYKDLSGNEESKRPENLEILKEIKSRLTEETQRVMSKKEEAKSLQIQQQQQQQQLLQQQQQQQILESTTRNRQASQQELPKPPILSGYLKKQGDKGLVRSFKKRWFLQRDTKLFYYEKEGDSEPYGFVNLPEMINVKTVDSGFELATPSRVYVFQVFKPSDLTYWTEGLKEFKKYYQSLQNSQKFGANANGNGNSSPNMSSSGSYSDFRKYSESSQQPLNSSTGAINTTPQRGTPIKDRRGTVSGGTTEYSHSSSSTAPDSPTLSSSYVPPPSSSNLNPQDEELKRRENEIIRKHQEKLKQQDDQQQDDKQQQQQQSQEPPQQQQQQQEQLQSQPSQQQQQQQQQQQQQQQQQQQQQQQQQQQQQQQQQQPPQTSPQNSRHGSTNYSQLQQQQQQPQQQPQQQSSPQVIISNNNSPRFESQQQQNNFHNNGSNINLESFRQSIEDELNKKFLKEKQDLMEFEIKKRLEIESEIKKLQLQLDQTKTDAEEKQNKSSNELKKKKAEIEDYEARVTIITKRNEEMDAKIKELESSRPVETFPHEFLWTEEVNSRDLLIASQSKRILELEEQLKLKDNAVTVIKRENEMLRQETEKKDKYINELLEKGGGSGIHTNSNNNNNSNNNNNNSNNNSNTDKIKESMVAHQTQNAFLLQEIQRLETQSQFKLDIKIQQIEELENQLEQQLYQFHRFREAIIGTMSNEYCVKIEKENLDVKKEYFQSLGVSIKLHRVKEGYFANIDINSLFDKVIKENVHYRNWPEWISNQFNQA.

The stretch at 57 to 121 (ENLEILKEIK…RNRQASQQEL (65 aa)) forms a coiled coil. Polar residues predominate over residues 108–120 (ESTTRNRQASQQE). Disordered regions lie at residues 108–127 (ESTTRNRQASQQELPKPPIL), 228–325 (GANA…QDEE), 339–375 (EKLKQQDDQQQDDKQQQQQQSQEPPQQQQQQQEQLQS), 405–475 (QQQQ…NGSN), 523–542 (DQTKTDAEEKQNKSSNELKK), and 645–675 (KGGGSGIHTNSNNNNNSNNNNNNSNNNSNTD). Residues 124–216 (PPILSGYLKK…WTEGLKEFKK (93 aa)) form the PH domain. Low complexity predominate over residues 228-248 (GANANGNGNSSPNMSSSGSYS). Over residues 255–274 (ESSQQPLNSSTGAINTTPQR) the composition is skewed to polar residues. The span at 293-321 (SHSSSSTAPDSPTLSSSYVPPPSSSNLNP) shows a compositional bias: low complexity. Residues 322–412 (QDEELKRREN…QQQQQQQQQQ (91 aa)) are a coiled coil. Residues 339-353 (EKLKQQDDQQQDDKQ) show a composition bias toward basic and acidic residues. Composition is skewed to low complexity over residues 354–375 (QQQQQSQEPPQQQQQQQEQLQS) and 405–414 (QQQQQQQQPP). Residues 417-428 (SPQNSRHGSTNY) are compositionally biased toward polar residues. Residues 429–449 (SQLQQQQQQPQQQPQQQSSPQ) are compositionally biased toward low complexity. Polar residues predominate over residues 450 to 475 (VIISNNNSPRFESQQQQNNFHNNGSN). Residues 487–645 (DELNKKFLKE…DKYINELLEK (159 aa)) adopt a coiled-coil conformation. Over residues 525–542 (TKTDAEEKQNKSSNELKK) the composition is skewed to basic and acidic residues. Residues 654–673 (NSNNNNNSNNNNNNSNNNSN) are compositionally biased toward low complexity. A coiled-coil region spans residues 678 to 734 (KESMVAHQTQNAFLLQEIQRLETQSQFKLDIKIQQIEELENQLEQQLYQFHRFREAI).

This chain is PH domain-containing protein DDB_G0275795, found in Dictyostelium discoideum (Social amoeba).